We begin with the raw amino-acid sequence, 117 residues long: Large ribosomal subunit protein eL34 (117 aa).

The residue at position 12 (Ser12) is a Phosphoserine. N6-acetyllysine occurs at positions 36 and 43. Lys108 is covalently cross-linked (Glycyl lysine isopeptide (Lys-Gly) (interchain with G-Cter in SUMO2)).

Belongs to the eukaryotic ribosomal protein eL34 family. As to quaternary structure, component of the large ribosomal subunit.

The protein localises to the cytoplasm. It is found in the cytosol. It localises to the endoplasmic reticulum. In terms of biological role, component of the large ribosomal subunit. The ribosome is a large ribonucleoprotein complex responsible for the synthesis of proteins in the cell. This chain is Large ribosomal subunit protein eL34 (RPL34), found in Sus scrofa (Pig).